The following is a 545-amino-acid chain: MLTLGGERTSGESVRKQNVLAACSFANFVKTSLGPVGLDKMLVDDVGDVTITNDGATILKLLDVEHPAAKILVQLAQLQDEEVGDGTTSVVILAAALLKNADELISRFVHPTTVINGYRLACREACKYIQEHMAYDVNKLGKAGLINVARTAMSSKLINLDADMFSQMAVDALMAVEVSGGPKGPVYPIKAVNILKAHGRSMSESMLIDGYALNCTAASQQMPRIIKKAKIAFLDFSLQKVKMKLGVQVVVKDPAQLEAIRQREADITKERIQKILNAGANVILTTGGIDDLCMKYFVEVNAMAVRRCKKVDLKNMAKATGGQLIVSLADMEGDEVFDPTKLGNAEEVSQERICDDELIILRGPKVHPSASIILRGANDFYVDEMERSLHDALLVVKRVLESKRIVPGAGACETAVSIYLENYALTLSSREQLAIAEFARAMLSIPKQLAVNAGVDSTELVARLRSCHNSSQSKPDQAHNKWWGLDLNNQYVADCKEIGVFEPLVSKIKSLKFATEAAITILRIDDLIKLKEEKQPDHDGDECGY.

It belongs to the TCP-1 chaperonin family. In terms of assembly, heterooligomeric complex of about 850 to 900 kDa that forms two stacked rings, 12 to 16 nm in diameter.

It localises to the cytoplasm. Molecular chaperone; assists the folding of proteins upon ATP hydrolysis. Known to play a role, in vitro, in the folding of actin and tubulin. This chain is T-complex protein 1 subunit alpha (TCP-1A), found in Schistosoma mansoni (Blood fluke).